The chain runs to 289 residues: Delta-sarcoglycan (289 aa).

Topologically, residues Met-1 to Tyr-35 are cytoplasmic. The chain crosses the membrane as a helical; Signal-anchor for type II membrane protein span at residues Phe-36–Leu-56. Over Lys-57–Leu-289 the chain is Extracellular. N-linked (GlcNAc...) asparagine glycosylation is found at Asn-60 and Asn-108. 2 cysteine pairs are disulfide-bonded: Cys-263/Cys-288 and Cys-265/Cys-281. N-linked (GlcNAc...) asparagine glycosylation occurs at Asn-284.

This sequence belongs to the sarcoglycan beta/delta/gamma/zeta family. Interacts with FLNC and DAG1. Cross-link to form 2 major subcomplexes: one consisting of SGCB, SGCD and SGCG and the other consisting of SGCB and SGCD. The association between SGCB and SGCG is particularly strong while SGCA is loosely associated with the other sarcoglycans. In terms of processing, glycosylated. Post-translationally, disulfide bonds are present. In terms of tissue distribution, most strongly expressed in skeletal and cardiac muscle. Also detected in smooth muscle. Weak expression in brain and lung.

It is found in the cell membrane. The protein resides in the sarcolemma. Its subcellular location is the cytoplasm. The protein localises to the cytoskeleton. Component of the sarcoglycan complex, a subcomplex of the dystrophin-glycoprotein complex which forms a link between the F-actin cytoskeleton and the extracellular matrix. This is Delta-sarcoglycan (SGCD) from Homo sapiens (Human).